The sequence spans 110 residues: Large ribosomal subunit protein uL22 (110 aa).

The protein belongs to the universal ribosomal protein uL22 family. Part of the 50S ribosomal subunit.

Its function is as follows. This protein binds specifically to 23S rRNA; its binding is stimulated by other ribosomal proteins, e.g. L4, L17, and L20. It is important during the early stages of 50S assembly. It makes multiple contacts with different domains of the 23S rRNA in the assembled 50S subunit and ribosome. The globular domain of the protein is located near the polypeptide exit tunnel on the outside of the subunit, while an extended beta-hairpin is found that lines the wall of the exit tunnel in the center of the 70S ribosome. This Leptospira borgpetersenii serovar Hardjo-bovis (strain JB197) protein is Large ribosomal subunit protein uL22.